A 448-amino-acid polypeptide reads, in one-letter code: Probable glycine dehydrogenase (decarboxylating) subunit 1 (448 aa).

The protein belongs to the GcvP family. N-terminal subunit subfamily. As to quaternary structure, the glycine cleavage system is composed of four proteins: P, T, L and H. In this organism, the P 'protein' is a heterodimer of two subunits.

The catalysed reaction is N(6)-[(R)-lipoyl]-L-lysyl-[glycine-cleavage complex H protein] + glycine + H(+) = N(6)-[(R)-S(8)-aminomethyldihydrolipoyl]-L-lysyl-[glycine-cleavage complex H protein] + CO2. The glycine cleavage system catalyzes the degradation of glycine. The P protein binds the alpha-amino group of glycine through its pyridoxal phosphate cofactor; CO(2) is released and the remaining methylamine moiety is then transferred to the lipoamide cofactor of the H protein. This chain is Probable glycine dehydrogenase (decarboxylating) subunit 1, found in Staphylococcus aureus (strain COL).